The sequence spans 337 residues: Methenyltetrahydromethanopterin cyclohydrolase (337 aa).

This sequence belongs to the MCH family.

The protein localises to the cytoplasm. It catalyses the reaction 5,10-methenyl-5,6,7,8-tetrahydromethanopterin + H2O = N(5)-formyl-5,6,7,8-tetrahydromethanopterin + H(+). The protein operates within one-carbon metabolism; formaldehyde degradation; formate from formaldehyde (H(4)MPT route): step 3/5. In terms of biological role, catalyzes the hydrolysis of methenyl-H(4)MPT(+) to 5-formyl-H(4)MPT. The chain is Methenyltetrahydromethanopterin cyclohydrolase (mch) from Xanthobacter autotrophicus.